Reading from the N-terminus, the 362-residue chain is Salactin (362 aa).

The span at 1–10 (MSDDTEDDSG) shows a compositional bias: acidic residues. The disordered stretch occupies residues 1-28 (MSDDTEDDSGGESTADMEFGEQPAPLGV).

Forms dynamically unstable filaments. Monomers are added at the growing filament end. In vitro, salactin polymerizes in the presence of ATP and AMP-PNP but not in the presence of ADP, GTP, ATPgammaS or buffer alone.

It is found in the cytoplasm. In terms of biological role, actin homolog which might be involved in partitioning DNA between daughter cells when chromosomal copy number is low. The chain is Salactin from Halobacterium salinarum (strain ATCC 700922 / JCM 11081 / NRC-1) (Halobacterium halobium).